Consider the following 157-residue polypeptide: MANTETAVFGMGCFWSAEELFRHVDGVISTEVGYMGGNVKNPTYGQVCRGKSGHIEVVKVSYDSKIITYDDLLELFWKNHDPTTPNRQGWDVGEQYSSHIFYFTDEQRIVAEKSLEKMQCYMDLKIVTAIKKASDFFPAEEYHQKYFMKKNNCILNF.

Cys13 is a catalytic residue.

The protein belongs to the MsrA Met sulfoxide reductase family.

The catalysed reaction is L-methionyl-[protein] + [thioredoxin]-disulfide + H2O = L-methionyl-(S)-S-oxide-[protein] + [thioredoxin]-dithiol. It catalyses the reaction [thioredoxin]-disulfide + L-methionine + H2O = L-methionine (S)-S-oxide + [thioredoxin]-dithiol. Its function is as follows. Has an important function as a repair enzyme for proteins that have been inactivated by oxidation. Catalyzes the reversible oxidation-reduction of methionine sulfoxide in proteins to methionine. The sequence is that of Peptide methionine sulfoxide reductase MsrA from Methanococcus maripaludis (strain C7 / ATCC BAA-1331).